Here is a 299-residue protein sequence, read N- to C-terminus: Oxygen-dependent coproporphyrinogen-III oxidase (299 aa).

Serine 92 contacts substrate. A divalent metal cation is bound by residues histidine 96 and histidine 106. The active-site Proton donor is the histidine 106. Asparagine 108–arginine 110 provides a ligand contact to substrate. Residues histidine 145 and histidine 175 each contribute to the a divalent metal cation site. Residues tyrosine 240–glutamate 275 form an important for dimerization region. Residue glycine 258–arginine 260 participates in substrate binding.

It belongs to the aerobic coproporphyrinogen-III oxidase family. In terms of assembly, homodimer. Requires a divalent metal cation as cofactor.

It is found in the cytoplasm. It catalyses the reaction coproporphyrinogen III + O2 + 2 H(+) = protoporphyrinogen IX + 2 CO2 + 2 H2O. It functions in the pathway porphyrin-containing compound metabolism; protoporphyrin-IX biosynthesis; protoporphyrinogen-IX from coproporphyrinogen-III (O2 route): step 1/1. In terms of biological role, involved in the heme biosynthesis. Catalyzes the aerobic oxidative decarboxylation of propionate groups of rings A and B of coproporphyrinogen-III to yield the vinyl groups in protoporphyrinogen-IX. This is Oxygen-dependent coproporphyrinogen-III oxidase from Salmonella heidelberg (strain SL476).